The sequence spans 901 residues: Protein translocase subunit SecA (901 aa).

Residues glutamine 87, 105-109 (GEGKT), and aspartate 512 contribute to the ATP site. Positions 859–901 (HQDDDSAAAAALAAQTGERKVGRNDPCPCGSGKKYKQCHGRLQ) are disordered. Residues cysteine 885, cysteine 887, cysteine 896, and histidine 897 each coordinate Zn(2+). Basic residues predominate over residues 891-901 (KKYKQCHGRLQ).

It belongs to the SecA family. Monomer and homodimer. Part of the essential Sec protein translocation apparatus which comprises SecA, SecYEG and auxiliary proteins SecDF-YajC and YidC. It depends on Zn(2+) as a cofactor.

The protein localises to the cell inner membrane. It localises to the cytoplasm. The catalysed reaction is ATP + H2O + cellular proteinSide 1 = ADP + phosphate + cellular proteinSide 2.. Its function is as follows. Part of the Sec protein translocase complex. Interacts with the SecYEG preprotein conducting channel. Has a central role in coupling the hydrolysis of ATP to the transfer of proteins into and across the cell membrane, serving both as a receptor for the preprotein-SecB complex and as an ATP-driven molecular motor driving the stepwise translocation of polypeptide chains across the membrane. In Escherichia coli O127:H6 (strain E2348/69 / EPEC), this protein is Protein translocase subunit SecA.